The following is a 129-amino-acid chain: Fluoride-specific ion channel FluC 2 (129 aa).

A run of 4 helical transmembrane segments spans residues 3-23, 32-52, 59-79, and 90-110; these read FLYV…MNLW, ATLA…QFLA, LVIL…FSAF, and GAWL…LIMV. Residues glycine 71 and threonine 74 each contribute to the Na(+) site.

Belongs to the fluoride channel Fluc/FEX (TC 1.A.43) family.

It is found in the cell membrane. It catalyses the reaction fluoride(in) = fluoride(out). Its activity is regulated as follows. Na(+) is not transported, but it plays an essential structural role and its presence is essential for fluoride channel function. In terms of biological role, fluoride-specific ion channel. Important for reducing fluoride concentration in the cell, thus reducing its toxicity. The polypeptide is Fluoride-specific ion channel FluC 2 (Listeria monocytogenes serotype 4b (strain F2365)).